The sequence spans 417 residues: Lissencephaly-1 homolog (417 aa).

Residues 7–39 (QKEELNGAILDYFDSSGYKLTSTEFTKETNIEL) enclose the LisH domain. A coiled-coil region spans residues 52–80 (TSVIRLQKKVMDLEAKVSQLEEELNNGGR). Residues 72-93 (EEELNNGGRGPARRGKEDALPR) are disordered. WD repeat units follow at residues 102 to 143 (GHRN…RTLK), 144 to 185 (GHTN…KTLH), 186 to 225 (GHDHNVSCVRFLPSGDQLVSSSRDKSIKVWETATGYCTKT), 228 to 267 (GHEDWVRKVIVSEDGTTLASCSNDQTARVWNLAKGECLLT), 270 to 339 (EHSH…CLQT), 342 to 383 (GHDN…KTIN), and 385 to 417 (AHSHFISCLDFCSHNPHIATGGVDDIIKIWKLG).

Belongs to the WD repeat LIS1/nudF family.

It is found in the cytoplasm. The protein resides in the cytoskeleton. The protein localises to the microtubule organizing center. It localises to the centrosome. In terms of biological role, positively regulates the activity of the minus-end directed microtubule motor protein dynein. May enhance dynein-mediated microtubule sliding by targeting dynein to the microtubule plus end. Required for several dynein- and microtubule-dependent processes. This is Lissencephaly-1 homolog from Heterostelium pallidum (strain ATCC 26659 / Pp 5 / PN500) (Cellular slime mold).